Here is a 480-residue protein sequence, read N- to C-terminus: MDVKDTGINRSDTPISDQDHDFRQWNHSSLDSNFLSLRSQIFEASYRRTDLIRVNHELFHERDALRRRNSELEAGILEEVMIREEMKRDLEVSKETVSELEGEAKEKTKLLSDIADYVRSMEDRLSKLIRCLNEENVPEEERGRKLETKEYNSKSILELVKEVVTKLETFQESTKKKKMELSRSVEFLEEENRDINVLLRAALFEKQTAEKQLKEMNDQKGLALLQIAGRGLQRIGFGFGLGESVEESSETGNIANEEEENGVVIAIEKTMKKLRQEVSQLKISLEESRLEEVGLRKVTEEQAQKLAENTVYINKLQNQEKFLAQNVEELVKAIREAESEVSRWREACELEVEAGQREVEVRDQLIAVLKSEVEKLRSALARSEGKLKLKEELAKAAMVAEEAAEKSLRLAERRIAQLLSRIEHLYRQLEEAESTERRRGKFRYVWCWPMWRFPTAASTAATATGSSSYTSNRALLRYDA.

Positions 1 to 20 (MDVKDTGINRSDTPISDQDH) are disordered.

This is an uncharacterized protein from Arabidopsis thaliana (Mouse-ear cress).